Consider the following 1265-residue polypeptide: MAPTLQDLTPSAGMKKTLQDEIEAILQERIMVLDGGMGTMIQRHKLSEEDFRGQEFKDHARPLKGNNDILSITQPNVIYQIHKEYLLAGADIIETNTFSSTSIAQADYGLEHLAYRMNMCSAGVARKAAEDISLQTGIKRYVAGALGPTNKTLSVSPSVERPDYRNITFDELVEAYKEQAKGLLDGGVDILLIETIFDTANAKAALFAVQKLFEEEYVPRPVFISGTIVDKSGRTLSGQTGEAFVISVSHADPLCIGLNCALGAAEMRPFIETIGKCTTAYVLCYPNAGLPNTFGDYDETPHVMAMHLKDFAVDGLVNIVGGCCGTTPDHIREIAEAVKNCKPRVPPATVFEGHMLLSGLEPFRIGPYTNFVNIGERCNVAGSRRFAKLIMAGNYEEALSVAKMQVEMGAQVLDINMDDGMLDGPSAMTRFCNFIASEPDIAKVPLCIDSSNFAVIEAGLKCCQGKCIVNSISLKEGEDDFLEKARKIKKFGAAVVVMAFDEEGQATETDPKIRVCTRAYHLLLKKLGFNPNDIIFDPNILTIGTGMEEHNLYAVNFINATKVIKETLPGAKVSGGLSNLSFSFRGMEAIREAMHGVFLYHAIKFGMDMGIVNAGSLPVYDDIHKELLQLCEDLIWNRDPEATEKLLHYAQTQGKGGKKVIQTDEWRNGPLEERLEYALVKGIEKYIIEDTEEARLNQEKYPRPLNIIEGPLMNGMKIVGDLFGAGKMFLPQVIKSARVMKKAVGHLIPFMEKEREETKVLTGKIEDEDPYQGTIVLATVKGDVHDIGKNIVGVVLGCNNFRVIDLGVMTPCDKILKAALDHKADIIGLSGLITPSLDEMIFVAKEMERLAIKIPLLIGGATTSRTHTAVKIAPRYSAPVIHVLDASKSVVVCSQLLDENLKDEYFEEILEEYEDIRQDHYESLKERRYLTLRQARENGFHIDWLSEPPPVKPTFLGTRVFEDYDLQKLVDYIDWKPFFDVWQLRGKYPNRGFPKIFDDKTVGEEAKKVYDDAQNMLQALISQKKLQARGVVGFWPAQSIQDDIHLYAEGAVPQASEPIATFYGLRQQAEKDSASSDPYLCLSDFIAPLHSGIPDYLGLFAVACFGVEELSKAYEEECDDYSSIMVKALGDRLAEAFAEELHERARRELWGYCSGEQLAVADLRRLRYEGIRPAPGYPSQPDHTEKLTVWRLADVEQRTGIRLTESLAMAPASAVSGLYFSNLKSKYFAVGKISKDQIEDYASRKNMSVAEVEKWLGPILGYDTD.

The region spanning 19–338 is the Hcy-binding domain; it reads QDEIEAILQE…DHIREIAEAV (320 aa). The Zn(2+) site is built by cysteine 260, cysteine 323, and cysteine 324. The Pterin-binding domain maps to 371–632; that stretch reads FVNIGERCNV…IHKELLQLCE (262 aa). (6S)-5,6,7,8-tetrahydrofolate is bound by residues 382–384, aspartate 449, asparagine 470, aspartate 537, asparagine 579, arginine 585, and arginine 591; that span reads GSR. Residues 662-759 enclose the B12-binding N-terminal domain; it reads QTDEWRNGPL…FMEKEREETK (98 aa). Methylcob(III)alamin-binding positions include glutamate 709, 782–786, histidine 785, serine 830, threonine 834, and alanine 886; that span reads GDVHD. Residues 772–907 form the B12-binding domain; the sequence is QGTIVLATVK…DENLKDEYFE (136 aa). The AdoMet activation domain maps to 923–1265; it reads SLKERRYLTL…LGPILGYDTD (343 aa). S-adenosyl-L-methionine-binding positions include aspartate 974, arginine 1172, and 1227 to 1228; that span reads YF. Threonine 1264 carries the phosphothreonine modification.

The protein belongs to the vitamin-B12 dependent methionine synthase family. As to quaternary structure, monomer. Dimer. Forms a multiprotein complex with MMACHC, MMADHC and MTRR. Methylcob(III)alamin serves as cofactor. Zn(2+) is required as a cofactor.

Its subcellular location is the cytoplasm. It carries out the reaction (6S)-5-methyl-5,6,7,8-tetrahydrofolate + L-homocysteine = (6S)-5,6,7,8-tetrahydrofolate + L-methionine. The protein operates within amino-acid biosynthesis; L-methionine biosynthesis via de novo pathway; L-methionine from L-homocysteine (MetH route): step 1/1. Functionally, catalyzes the transfer of a methyl group from methylcob(III)alamin (MeCbl) to homocysteine, yielding enzyme-bound cob(I)alamin and methionine in the cytosol. MeCbl is an active form of cobalamin (vitamin B12) used as a cofactor for methionine biosynthesis. Cob(I)alamin form is regenerated to MeCbl by a transfer of a methyl group from 5-methyltetrahydrofolate. The processing of cobalamin in the cytosol occurs in a multiprotein complex composed of at least MMACHC, MMADHC, MTRR (methionine synthase reductase) and MTR which may contribute to shuttle safely and efficiently cobalamin towards MTR in order to produce methionine. The polypeptide is Methionine synthase (MTR) (Bos taurus (Bovine)).